A 544-amino-acid chain; its full sequence is MAAKDVQFGNEVRQKMVNGVNILANAVRVTLGPKGRNVVVDRAFGGPHITKDGVTVAKEIELKDKFENMGAQMVKEVASKTNDVAGDGTTTATVLAQSIVAEGMKYVTAGMNPTDLKRGIDKAVAALVEELKNIAKPCDTSKEIAQVGSISANSDEQVGAIIAEAMEKVGKEGVITVEDGKSLENELDVVEGMQFDRGYLSPYFINDAEKQIAALDNPFVLLFDKKISNIRDLLPVLEQVAKASRPLLIIAEDVEGEALATLVVNNIRGILKTVAVKAPGFGDRRKAMLQDIAILTGGVVISEEVGLSLEKATLDDLGQAKRIEIGKENTTIIDGFGDAAQIEARVAEIRQQIETATSDYDKEKLQERVAKLAGGVAVIKVGAATEVEMKEKKDRVEDALHATRAAVEEGVVAGGGVALLRARAALENLHTGNADQDAGVQIVLRAVESPLRQIVANAGGEPSVVVNKVLEGKGNYGYNAGSGEYGDMIEMGVLDPAKVTRSALQHAASIAGLMLTTDCMIAEIPEDKPAVPDMGGMGGMGGMM.

ATP contacts are provided by residues 30-33, K51, 87-91, G415, and D495; these read TLGP and DGTTT.

The protein belongs to the chaperonin (HSP60) family. As to quaternary structure, forms a cylinder of 14 subunits composed of two heptameric rings stacked back-to-back. Interacts with the co-chaperonin GroES.

The protein resides in the cytoplasm. The enzyme catalyses ATP + H2O + a folded polypeptide = ADP + phosphate + an unfolded polypeptide.. Functionally, together with its co-chaperonin GroES, plays an essential role in assisting protein folding. The GroEL-GroES system forms a nano-cage that allows encapsulation of the non-native substrate proteins and provides a physical environment optimized to promote and accelerate protein folding. The protein is Chaperonin GroEL of Neisseria meningitidis serogroup C (strain 053442).